The following is a 167-amino-acid chain: SAR-endolysin (167 aa).

Residues 10 to 32 (SVMAAISGGAIAIASVLITGPGG) form a helical; Signal-anchor for type II membrane protein membrane-spanning segment. Catalysis depends on proton donor/acceptor residues glutamate 37 and aspartate 46.

Belongs to the glycosyl hydrolase 24 family.

It is found in the host cell inner membrane. It carries out the reaction Hydrolysis of (1-&gt;4)-beta-linkages between N-acetylmuramic acid and N-acetyl-D-glucosamine residues in a peptidoglycan and between N-acetyl-D-glucosamine residues in chitodextrins.. Functionally, signal-arrest-release (SAR) endolysin with lysozyme activity that degrades host peptidoglycans and participates with the pinholin and spanin proteins in the sequential events which lead to programmed host cell lysis releasing the mature viral particles. Once the pinholin has permeabilized the host cell membrane, the SAR-endolysin is released into the periplasm where it breaks down the peptidoglycan layer. This Bacteriophage PS119 protein is SAR-endolysin (19).